A 558-amino-acid chain; its full sequence is MTEPVAAEVGRDFIRDIIQADLDQAKYREIVTRFPPEPNGYLHIGHAKSIALNFGIAQEFPGRCHLRFDDTNPVKEEQEYIDSIQADVHWLGFDWGKNLFFASDYFDRLYEWAETLIRDGLAYVDDQTQEEIRTSRGTLTEPGKNSPFRDRSVDENLDLFRRMKAGEFPNGARVLRAKIDMAAGNINLRDPVLYRILHAHHPRTGNAWCIYPSYDYAHGQSDAIEGITHSICTLEFEDHRPLYDWFIEKLPVPSKPHQYEFARLNLTYTLLSKRVLTQLVREGHVAGWDDPRMPTMAGMRRRGVPPAALREFVKRIGVAKANSVVDVGMLEFCIREELNRTAQRRMAVLKPLKVVIENYPEGQTEELEAINHPDDPSAGTRKITFGRELYIEQDDFMENPPKKFFRLSPGNEVRLRYAYFVKCTGVIKNESGEVVELRCTYDPATRGGNAPDGRKVKATMHWLSAAASKPAEIRIYNQLFANPSPDASNFAADLNPQSLEILSNARVEASVAESNSTEPMQFERQGYFVRDKDSTPGKPVFSRTIGLRDTFAKEVAKG.

A 'HIGH' region motif is present at residues 36–46 (PEPNGYLHIGH). Residues 37 to 39 (EPN) and 43 to 49 (HIGHAKS) contribute to the ATP site. L-glutamine contacts are provided by Asp-69 and Tyr-214. ATP is bound by residues Thr-233, 263–264 (RL), and 271–273 (LSK). The 'KMSKS' region motif lies at 270–274 (LLSKR).

Belongs to the class-I aminoacyl-tRNA synthetase family. Monomer.

It localises to the cytoplasm. It carries out the reaction tRNA(Gln) + L-glutamine + ATP = L-glutaminyl-tRNA(Gln) + AMP + diphosphate. In Bradyrhizobium diazoefficiens (strain JCM 10833 / BCRC 13528 / IAM 13628 / NBRC 14792 / USDA 110), this protein is Glutamine--tRNA ligase.